A 3187-amino-acid chain; its full sequence is Cilia- and flagella-associated protein 47 (3187 aa).

The 124-residue stretch at 1746–1869 folds into the Calponin-homology (CH) domain; it reads SDSERILLSW…LCVYMYERLP (124 aa). The disordered stretch occupies residues 2024–2052; it reads KLTESRQYPKHDDDMSSSGSDTDQGCSDS. Basic and acidic residues predominate over residues 2026-2037; that stretch reads TESRQYPKHDDD.

Interacts with CFAP65. Highly expressed in spermatzoa (at protein level).

The protein localises to the cytoplasm. It is found in the cytoskeleton. Its subcellular location is the flagellum basal body. In terms of biological role, plays a role in flagellar formation and sperm motility. The polypeptide is Cilia- and flagella-associated protein 47 (Homo sapiens (Human)).